A 408-amino-acid chain; its full sequence is Tripartite motif-containing protein 59 (408 aa).

The RING-type zinc finger occupies C10–R60. The B box-type zinc finger occupies S92 to L134. Zn(2+) is bound by residues C97, H100, C120, and H126. Residues L163–S247 are a coiled coil. Residues A333–F353 traverse the membrane as a helical segment.

Belongs to the TRIM/RBCC family. Interacts with ECSIT.

It is found in the endoplasmic reticulum membrane. Functionally, may serve as a multifunctional regulator for innate immune signaling pathways. The protein is Tripartite motif-containing protein 59 (TRIM59) of Gallus gallus (Chicken).